We begin with the raw amino-acid sequence, 496 residues long: Squalene epoxidase ERG1 (496 aa).

The Cytoplasmic portion of the chain corresponds to M1–T16. Residues I17 to L37 form a helical membrane-spanning segment. FAD contacts are provided by residues V28–I29, E48–R49, R56, and R158. Residues A38–E474 lie on the Lumenal side of the membrane. Residues K284, K289, and K311 each participate in a glycyl lysine isopeptide (Lys-Gly) (interchain with G-Cter in ubiquitin) cross-link. 2 residues coordinate FAD: D335 and M348. The chain crosses the membrane as a helical span at residues G475–I495. Residue G496 is a topological domain, cytoplasmic.

This sequence belongs to the squalene monooxygenase family. Interacts with ERG28. It depends on FAD as a cofactor.

It localises to the microsome membrane. The protein localises to the endoplasmic reticulum membrane. The protein resides in the lipid droplet. The enzyme catalyses squalene + reduced [NADPH--hemoprotein reductase] + O2 = (S)-2,3-epoxysqualene + oxidized [NADPH--hemoprotein reductase] + H2O + H(+). It participates in terpene metabolism; lanosterol biosynthesis; lanosterol from farnesyl diphosphate: step 2/3. With respect to regulation, inhibited by the allylamine antimycotic drugs. In terms of biological role, squalene epoxidase; part of the third module of ergosterol biosynthesis pathway that includes the late steps of the pathway. ERG1 catalyzes the epoxidation of squalene into 2,3-epoxysqualene. The third module or late pathway involves the ergosterol synthesis itself through consecutive reactions that mainly occur in the endoplasmic reticulum (ER) membrane. Firstly, the squalene synthase ERG9 catalyzes the condensation of 2 farnesyl pyrophosphate moieties to form squalene, which is the precursor of all steroids. Squalene synthase is crucial for balancing the incorporation of farnesyl diphosphate (FPP) into sterol and nonsterol isoprene synthesis. Secondly, the squalene epoxidase ERG1 catalyzes the stereospecific oxidation of squalene to (S)-2,3-epoxysqualene, which is considered to be a rate-limiting enzyme in steroid biosynthesis. Then, the lanosterol synthase ERG7 catalyzes the cyclization of (S)-2,3 oxidosqualene to lanosterol, a reaction that forms the sterol core. In the next steps, lanosterol is transformed to zymosterol through a complex process involving various demethylation, reduction and desaturation reactions. The lanosterol 14-alpha-demethylase ERG11 (also known as CYP51) catalyzes C14-demethylation of lanosterol to produce 4,4'-dimethyl cholesta-8,14,24-triene-3-beta-ol, which is critical for ergosterol biosynthesis. The C-14 reductase ERG24 reduces the C14=C15 double bond of 4,4-dimethyl-cholesta-8,14,24-trienol to produce 4,4-dimethyl-cholesta-8,24-dienol. 4,4-dimethyl-cholesta-8,24-dienol is substrate of the C-4 demethylation complex ERG25-ERG26-ERG27 in which ERG25 catalyzes the three-step monooxygenation required for the demethylation of 4,4-dimethyl and 4alpha-methylsterols, ERG26 catalyzes the oxidative decarboxylation that results in a reduction of the 3-beta-hydroxy group at the C-3 carbon to an oxo group, and ERG27 is responsible for the reduction of the keto group on the C-3. ERG28 has a role as a scaffold to help anchor ERG25, ERG26 and ERG27 to the endoplasmic reticulum and ERG29 regulates the activity of the iron-containing C4-methylsterol oxidase ERG25. Then, the sterol 24-C-methyltransferase ERG6 catalyzes the methyl transfer from S-adenosyl-methionine to the C-24 of zymosterol to form fecosterol. The C-8 sterol isomerase ERG2 catalyzes the reaction which results in unsaturation at C-7 in the B ring of sterols and thus converts fecosterol to episterol. The sterol-C5-desaturase ERG3 then catalyzes the introduction of a C-5 double bond in the B ring to produce 5-dehydroepisterol. The C-22 sterol desaturase ERG5 further converts 5-dehydroepisterol into ergosta-5,7,22,24(28)-tetraen-3beta-ol by forming the C-22(23) double bond in the sterol side chain. Finally, ergosta-5,7,22,24(28)-tetraen-3beta-ol is substrate of the C-24(28) sterol reductase ERG4 to produce ergosterol. This chain is Squalene epoxidase ERG1, found in Saccharomyces cerevisiae (strain ATCC 204508 / S288c) (Baker's yeast).